Consider the following 133-residue polypeptide: Lanmodulin (133 aa).

A signal peptide spans 1 to 21; that stretch reads MAFRLSSAVLLAALVAAPAYA. 20 residues coordinate Nd(3+): Asp-35, Asp-37, Asp-39, Thr-41, Glu-46, Asp-59, Asp-61, Asp-63, Thr-65, Glu-70, Asp-84, Asp-86, Asp-88, Thr-90, Glu-95, Asn-108, Asp-110, Asp-112, Thr-114, and Glu-119. 4 EF-hand domains span residues 35–46, 59–70, 84–95, and 108–119; these read DPDKDGTIDLKE, DPDKDGTLDAKE, DPDNDGTLDKKE, and NPDNDGTIDARE.

Monomer.

Its subcellular location is the periplasm. Its function is as follows. High-affinity lanthanide (Ln)-binding protein. Shows 100 million-fold selectivity for La(3+) over Ca(2+). Binds 3 equiv of Ln(3+) with picomolar affinity and a fourth with approximately micromolar affinity. May be involved in receiving and then transporting lanthanides (such as La(3+), Nd(3+) and Sm(3+)) to a specific periplasmic destination. This is Lanmodulin from Methylorubrum extorquens (strain ATCC 14718 / DSM 1338 / JCM 2805 / NCIMB 9133 / AM1) (Methylobacterium extorquens).